We begin with the raw amino-acid sequence, 254 residues long: Phosphoribosylaminoimidazole-succinocarboxamide synthase (254 aa).

This sequence belongs to the SAICAR synthetase family.

The enzyme catalyses 5-amino-1-(5-phospho-D-ribosyl)imidazole-4-carboxylate + L-aspartate + ATP = (2S)-2-[5-amino-1-(5-phospho-beta-D-ribosyl)imidazole-4-carboxamido]succinate + ADP + phosphate + 2 H(+). The protein operates within purine metabolism; IMP biosynthesis via de novo pathway; 5-amino-1-(5-phospho-D-ribosyl)imidazole-4-carboxamide from 5-amino-1-(5-phospho-D-ribosyl)imidazole-4-carboxylate: step 1/2. This chain is Phosphoribosylaminoimidazole-succinocarboxamide synthase, found in Brucella anthropi (strain ATCC 49188 / DSM 6882 / CCUG 24695 / JCM 21032 / LMG 3331 / NBRC 15819 / NCTC 12168 / Alc 37) (Ochrobactrum anthropi).